A 72-amino-acid polypeptide reads, in one-letter code: Protein kish-A (72 aa).

An N-terminal signal peptide occupies residues 1–26 (MSAIFNFQSLLTVILLLICTCAYIRS). Topologically, residues 27-53 (LTPSLLDKNKTGFLGIFWKCARIGERK) are extracellular. A glycan (N-linked (GlcNAc...) asparagine) is linked at Asn-35. A helical transmembrane segment spans residues 54-71 (SPYVAFCCIVMALTILFS). A topological domain (cytoplasmic) is located at residue Glu-72.

Belongs to the KISH family.

Its subcellular location is the golgi apparatus membrane. Involved in the early part of the secretory pathway. The polypeptide is Protein kish-A (tmem167a) (Danio rerio (Zebrafish)).